We begin with the raw amino-acid sequence, 101 residues long: NAD(P)H-quinone oxidoreductase subunit 4L, chloroplastic (101 aa).

The next 3 membrane-spanning stretches (helical) occupy residues Met2–Ile22, Met32–Phe52, and Ile61–Val81.

It belongs to the complex I subunit 4L family. NDH is composed of at least 16 different subunits, 5 of which are encoded in the nucleus.

It localises to the plastid. It is found in the chloroplast thylakoid membrane. The enzyme catalyses a plastoquinone + NADH + (n+1) H(+)(in) = a plastoquinol + NAD(+) + n H(+)(out). It carries out the reaction a plastoquinone + NADPH + (n+1) H(+)(in) = a plastoquinol + NADP(+) + n H(+)(out). Functionally, NDH shuttles electrons from NAD(P)H:plastoquinone, via FMN and iron-sulfur (Fe-S) centers, to quinones in the photosynthetic chain and possibly in a chloroplast respiratory chain. The immediate electron acceptor for the enzyme in this species is believed to be plastoquinone. Couples the redox reaction to proton translocation, and thus conserves the redox energy in a proton gradient. The protein is NAD(P)H-quinone oxidoreductase subunit 4L, chloroplastic of Daucus carota (Wild carrot).